A 521-amino-acid polypeptide reads, in one-letter code: 7-deoxyloganic acid hydroxylase (521 aa).

A helical transmembrane segment spans residues Ile8–Val28. 2 N-linked (GlcNAc...) asparagine glycosylation sites follow: Asn107 and Asn311. Cys469 contributes to the heme binding site.

This sequence belongs to the cytochrome P450 family. As to expression, mostly present in actively growing aerial organs, including leaves, flower buds and stems, and, to a lower extent, in mature leaves, roots and opened flowers. Expressed in the leaf internal phloem-associated parenchyma (IPAP) inside the mesophyll.

It is found in the endoplasmic reticulum membrane. The catalysed reaction is 7-deoxyloganate + reduced [NADPH--hemoprotein reductase] + O2 = loganate + oxidized [NADPH--hemoprotein reductase] + H2O + H(+). Its pathway is alkaloid biosynthesis. Its function is as follows. Component of the seco-iridoid and derivatives monoterpenoid indole alkaloids (MIAs, e.g. vincristine, quinine, and strychnine) biosynthesis pathway. Catalyzes the conversion of 7-deoxyloganic acid into loganic acid. Not active on 7-deoxyloganetic acid. In Catharanthus roseus (Madagascar periwinkle), this protein is 7-deoxyloganic acid hydroxylase.